The following is a 363-amino-acid chain: DNA primase small subunit PriS (363 aa).

Catalysis depends on residues Asp105, Asp107, and Asp265.

This sequence belongs to the eukaryotic-type primase small subunit family. Heterodimer of a small subunit (PriS) and a large subunit (PriL). It depends on Mg(2+) as a cofactor. Mn(2+) is required as a cofactor.

Catalytic subunit of DNA primase, an RNA polymerase that catalyzes the synthesis of short RNA molecules used as primers for DNA polymerase during DNA replication. The small subunit contains the primase catalytic core and has DNA synthesis activity on its own. Binding to the large subunit stabilizes and modulates the activity, increasing the rate of DNA synthesis while decreasing the length of the DNA fragments, and conferring RNA synthesis capability. The DNA polymerase activity may enable DNA primase to also catalyze primer extension after primer synthesis. May also play a role in DNA repair. The polypeptide is DNA primase small subunit PriS (Methanococcus maripaludis (strain C7 / ATCC BAA-1331)).